Reading from the N-terminus, the 201-residue chain is 2-phospho-L-lactate guanylyltransferase (201 aa).

This sequence belongs to the CofC family. Homodimer.

The enzyme catalyses (2S)-2-phospholactate + GTP + H(+) = (2S)-lactyl-2-diphospho-5'-guanosine + diphosphate. The protein operates within cofactor biosynthesis; coenzyme F420 biosynthesis. Guanylyltransferase that catalyzes the activation of (2S)-2-phospholactate (2-PL) as (2S)-lactyl-2-diphospho-5'-guanosine, via the condensation of 2-PL with GTP. It is involved in the biosynthesis of coenzyme F420, a hydride carrier cofactor. This chain is 2-phospho-L-lactate guanylyltransferase, found in Natronomonas pharaonis (strain ATCC 35678 / DSM 2160 / CIP 103997 / JCM 8858 / NBRC 14720 / NCIMB 2260 / Gabara) (Halobacterium pharaonis).